A 533-amino-acid polypeptide reads, in one-letter code: Putative phosphate permease jhp_1384 (533 aa).

The next 12 helical transmembrane spans lie at 23 to 43 (IALA…FGQA), 47 to 67 (GLLL…IGAN), 81 to 101 (AISM…GAII), 129 to 149 (VMLA…LIGA), 156 to 176 (SVVG…AINW), 182 to 202 (IVAS…FFLM), 221 to 241 (VVPY…IVKV), 248 to 268 (VGFE…FILF), 286 to 306 (VNEL…FAHG), 338 to 358 (VPLW…SLYG), 372 to 392 (LDKM…LLAS), and 509 to 529 (LVTV…LGFI).

The protein belongs to the inorganic phosphate transporter (PiT) (TC 2.A.20) family.

It localises to the cell membrane. Potential transporter for phosphate. This Helicobacter pylori (strain J99 / ATCC 700824) (Campylobacter pylori J99) protein is Putative phosphate permease jhp_1384.